The following is a 438-amino-acid chain: Na(+)/H(+) antiporter NhaA (438 aa).

Transmembrane regions (helical) follow at residues 23–43 (FGGI…NSFL), 62–82 (FFIG…LFFL), 104–124 (SFPV…YFFL), 133–153 (GFGI…MLLG), 162–182 (VFLI…IALF), 185–205 (TNLK…LAVL), 221–241 (VLLW…AVIL), 302–322 (FLAP…NAGV), 337–357 (LGVI…ITFI), 372–392 (WWHI…SMFI), and 410–430 (IAIL…LFAL).

The protein belongs to the NhaA Na(+)/H(+) (TC 2.A.33) antiporter family.

It is found in the cell inner membrane. It carries out the reaction Na(+)(in) + 2 H(+)(out) = Na(+)(out) + 2 H(+)(in). Its function is as follows. Na(+)/H(+) antiporter that extrudes sodium in exchange for external protons. The polypeptide is Na(+)/H(+) antiporter NhaA (Helicobacter pylori (strain ATCC 700392 / 26695) (Campylobacter pylori)).